Consider the following 381-residue polypeptide: Tetraacyldisaccharide 4'-kinase (381 aa).

78 to 85 lines the ATP pocket; sequence AVGGTGKT.

This sequence belongs to the LpxK family.

The catalysed reaction is a lipid A disaccharide + ATP = a lipid IVA + ADP + H(+). It functions in the pathway glycolipid biosynthesis; lipid IV(A) biosynthesis; lipid IV(A) from (3R)-3-hydroxytetradecanoyl-[acyl-carrier-protein] and UDP-N-acetyl-alpha-D-glucosamine: step 6/6. Functionally, transfers the gamma-phosphate of ATP to the 4'-position of a tetraacyldisaccharide 1-phosphate intermediate (termed DS-1-P) to form tetraacyldisaccharide 1,4'-bis-phosphate (lipid IVA). The polypeptide is Tetraacyldisaccharide 4'-kinase (Syntrophobacter fumaroxidans (strain DSM 10017 / MPOB)).